A 104-amino-acid chain; its full sequence is Pyrimidine/purine nucleoside phosphorylase (104 aa).

Belongs to the nucleoside phosphorylase PpnP family.

The enzyme catalyses a purine D-ribonucleoside + phosphate = a purine nucleobase + alpha-D-ribose 1-phosphate. It catalyses the reaction adenosine + phosphate = alpha-D-ribose 1-phosphate + adenine. The catalysed reaction is cytidine + phosphate = cytosine + alpha-D-ribose 1-phosphate. It carries out the reaction guanosine + phosphate = alpha-D-ribose 1-phosphate + guanine. The enzyme catalyses inosine + phosphate = alpha-D-ribose 1-phosphate + hypoxanthine. It catalyses the reaction thymidine + phosphate = 2-deoxy-alpha-D-ribose 1-phosphate + thymine. The catalysed reaction is uridine + phosphate = alpha-D-ribose 1-phosphate + uracil. It carries out the reaction xanthosine + phosphate = alpha-D-ribose 1-phosphate + xanthine. Its function is as follows. Catalyzes the phosphorolysis of diverse nucleosides, yielding D-ribose 1-phosphate and the respective free bases. Can use uridine, adenosine, guanosine, cytidine, thymidine, inosine and xanthosine as substrates. Also catalyzes the reverse reactions. This is Pyrimidine/purine nucleoside phosphorylase from Pelobacter propionicus (strain DSM 2379 / NBRC 103807 / OttBd1).